We begin with the raw amino-acid sequence, 142 residues long: Hemoglobin subunit alpha-A (142 aa).

Positions 2–142 constitute a Globin domain; the sequence is VLSAADKTNV…VGAVLTAKYR (141 aa). His-59 is an O2 binding site. His-88 is a heme b binding site.

This sequence belongs to the globin family. In terms of assembly, heterotetramer of two alpha chains and two beta chains. In terms of tissue distribution, red blood cells.

In terms of biological role, involved in oxygen transport from the lung to the various peripheral tissues. The sequence is that of Hemoglobin subunit alpha-A (HBAA) from Mareca penelope (Eurasian wigeon).